The chain runs to 547 residues: Chaperonin GroEL (547 aa).

ATP-binding positions include 30-33, Lys51, 87-91, Gly415, 479-481, and Asp495; these read TLGP, DGTTT, and NAA.

The protein belongs to the chaperonin (HSP60) family. Forms a cylinder of 14 subunits composed of two heptameric rings stacked back-to-back. Interacts with the co-chaperonin GroES.

The protein resides in the cytoplasm. The catalysed reaction is ATP + H2O + a folded polypeptide = ADP + phosphate + an unfolded polypeptide.. Its function is as follows. Together with its co-chaperonin GroES, plays an essential role in assisting protein folding. The GroEL-GroES system forms a nano-cage that allows encapsulation of the non-native substrate proteins and provides a physical environment optimized to promote and accelerate protein folding. This is Chaperonin GroEL from Cupriavidus taiwanensis (strain DSM 17343 / BCRC 17206 / CCUG 44338 / CIP 107171 / LMG 19424 / R1) (Ralstonia taiwanensis (strain LMG 19424)).